A 168-amino-acid chain; its full sequence is tRNA-splicing endonuclease (168 aa).

Residues Y107, H114, and K145 contribute to the active site.

The protein belongs to the tRNA-intron endonuclease family. Archaeal short subfamily. In terms of assembly, homotetramer; although the tetramer contains four active sites, only two participate in the cleavage. Therefore, it should be considered as a dimer of dimers.

The catalysed reaction is pretRNA = a 3'-half-tRNA molecule with a 5'-OH end + a 5'-half-tRNA molecule with a 2',3'-cyclic phosphate end + an intron with a 2',3'-cyclic phosphate and a 5'-hydroxyl terminus.. Functionally, endonuclease that removes tRNA introns. Cleaves pre-tRNA at the 5'- and 3'-splice sites to release the intron. The products are an intron and two tRNA half-molecules bearing 2',3' cyclic phosphate and 5'-OH termini. Recognizes a pseudosymmetric substrate in which 2 bulged loops of 3 bases are separated by a stem of 4 bp. This chain is tRNA-splicing endonuclease, found in Thermococcus gammatolerans (strain DSM 15229 / JCM 11827 / EJ3).